The primary structure comprises 608 residues: UvrABC system protein C (608 aa).

The region spanning Asn-16–Ile-94 is the GIY-YIG domain. Positions Asn-204–Val-239 constitute a UVR domain.

The protein belongs to the UvrC family. As to quaternary structure, interacts with UvrB in an incision complex.

It localises to the cytoplasm. The UvrABC repair system catalyzes the recognition and processing of DNA lesions. UvrC both incises the 5' and 3' sides of the lesion. The N-terminal half is responsible for the 3' incision and the C-terminal half is responsible for the 5' incision. The polypeptide is UvrABC system protein C (Pseudomonas aeruginosa (strain ATCC 15692 / DSM 22644 / CIP 104116 / JCM 14847 / LMG 12228 / 1C / PRS 101 / PAO1)).